Reading from the N-terminus, the 518-residue chain is Circadian clock oscillator protein KaiC (518 aa).

In terms of domain architecture, KaiC 1 spans 1–247; the sequence is MTNLPEHQSS…FTINNGINIF (247 aa). 7 residues coordinate ATP: Ser-49, Gly-50, Thr-51, Gly-52, Lys-53, Thr-54, and Leu-55. Thr-54 is a Mg(2+) binding site. Glu-78 serves as the catalytic Proton acceptor in CI (KaiC 1). An ATP-binding site is contributed by Ser-90. A B-loop, required to bind KaiB and SasA region spans residues 116 to 123; the sequence is QEVAGDFD. ATP is bound by residues Lys-225, Leu-226, Arg-227, Thr-229, and His-231. The tract at residues 248–260 is linker; sequence PLGAMRLTQRSSN. Positions 261 to 518 constitute a KaiC 2 domain; the sequence is VRVSSGVKTL…AKGMQDLESE (258 aa). 7 residues coordinate ATP: Thr-290, Gly-291, Thr-292, Gly-293, Lys-294, Thr-295, and Leu-296. Thr-295 provides a ligand contact to Mg(2+). Glu-318 lines the Mg(2+) pocket. Glu-318 functions as the Proton acceptor in CII (KaiC 2) in the catalytic mechanism. Trp-331 lines the ATP pocket. Phosphoserine; by autocatalysis is present on Ser-431. At Thr-432 the chain carries Phosphothreonine; by autocatalysis. Residues Arg-451, Lys-457, Met-458, Arg-459, Ser-461, His-463, and Lys-465 each coordinate ATP. Residues 488–497 form an A-loop, interacts with KaiA region; sequence GIISGTPTRI.

Belongs to the KaiC family. As to quaternary structure, homohexamer resembling 2 stacked donuts rings with a central pore nearly blocked on one side; hexamerization is dependent on ATP-binding. Binds 2 ATP per monomer, at the subunit interface on each ring. The KaiABC complex composition changes during the circadian cycle to control KaiC phosphorylation. Complexes KaiC(6), KaiA(2-4):KaiC(6), KaiB(6):KaiC(6) and KaiC(6):KaiB(6):KaiA(12) are among the most important forms, many form cooperatively. Interacts with SasA, probably as 1 SasA trimer:1 KaiC homohexamer, has highest affinity for unphosphorylated SasA. The CI domain binds to KaiB and SasA; as they have a similar fold they compete for the same site on CI. KaiB assumes a thioredoxin-like form called KaiB(fs) when bound to KaiC. It depends on Mg(2+) as a cofactor. Phosphorylated on serine/threonine residues by autocatalysis. Both phosphorylated and unphosphorylated forms exist. Both autophosphorylates and autodephosphorylates. Phosphorylated form correlates with clock speed. Post-translationally, phosphorylated on serine and threonine residues by autocatalysis. Has a 4 step phosphorylation cycle; the autokinase acts first on Thr-432, then Ser-431. When Ser-431 is modified KaiC switches to an autophosphatase mode, acting first on phospho-Thr-432 then phospho-Ser-431.

It catalyses the reaction L-seryl-[protein] + ATP = O-phospho-L-seryl-[protein] + ADP + H(+). The enzyme catalyses L-threonyl-[protein] + ATP = O-phospho-L-threonyl-[protein] + ADP + H(+). The catalysed reaction is ATP + H2O = ADP + phosphate + H(+). Its activity is regulated as follows. The interaction with KaiA enhances its phosphorylation status, while the interaction with KaiB decreases it. Its function is as follows. Central component of the KaiABC oscillator complex, which constitutes the main circadian regulator in cyanobacteria. Complex composition changes during the circadian cycle to control KaiC phosphorylation. KaiA stimulates KaiC autophosphorylation, while KaiB sequesters KaiA, leading to KaiC autodephosphorylation. Clock output pathways impact the RpaA transcriptional regulator. KaiC enhances the autophosphorylation activity of SasA, which then transfers its phosphate group to RpaA to activate it. KaiB and KaiC together enhance the phospho-RpaA dephosphatase activity of CikA. Stimulates SasA autophosphorylation. Fully phosphorylated KaiC (tested with phosphomimetic Asp-431-432-Asp) is the best stimulant, requires the ATPase activity of the CII domain. Unphosphorylated SasA associates with KaiC and its autophosphorylation activity is enhanced. Phospho-SasA is released and associates with RpaA, transferring its phosphate group. Formation of the KaiA:KaiB complex is promoted by KaiC, helping switch KaiC from its autophosphorylation to autodephosphatase function. In terms of biological role, has a weak, temperature-independent ATPase activity (about 14 molecules of ATP per day) that defines the circadian period. ATPase activity is mostly contributed by the CI domain; the CII domain augments the activity. The addition of KaiA increases activity. ATPase is inhibited during the KaiC phosphorylating phase and activated during the KaiC dephosphorylating phase. This is Circadian clock oscillator protein KaiC from Thermosynechococcus vestitus (strain NIES-2133 / IAM M-273 / BP-1).